Consider the following 395-residue polypeptide: Chorismate synthase (395 aa).

NADP(+) contacts are provided by Arg40 and Arg46. Residues 99-120 (PREGRNAPLSRPRPGHADLTGM) form a disordered region. Residues 134–136 (RSS), 256–257 (QA), Gly301, 316–320 (KPIPS), and Arg342 each bind FMN.

The protein belongs to the chorismate synthase family. Homotetramer. FMNH2 serves as cofactor.

It catalyses the reaction 5-O-(1-carboxyvinyl)-3-phosphoshikimate = chorismate + phosphate. The protein operates within metabolic intermediate biosynthesis; chorismate biosynthesis; chorismate from D-erythrose 4-phosphate and phosphoenolpyruvate: step 7/7. Catalyzes the anti-1,4-elimination of the C-3 phosphate and the C-6 proR hydrogen from 5-enolpyruvylshikimate-3-phosphate (EPSP) to yield chorismate, which is the branch point compound that serves as the starting substrate for the three terminal pathways of aromatic amino acid biosynthesis. This reaction introduces a second double bond into the aromatic ring system. In Bifidobacterium longum (strain DJO10A), this protein is Chorismate synthase.